A 181-amino-acid chain; its full sequence is Protein csk22 (181 aa).

Transmembrane regions (helical) follow at residues 5-22, 35-57, 61-78, 91-113, and 140-162; these read LQSV…YKKI, WLFT…SAIH, YGYL…VFFA, IYFR…RFLY, and LTIG…IIKL.

The protein resides in the cell membrane. The chain is Protein csk22 (csk22) from Bacillus subtilis (strain 168).